The chain runs to 35 residues: Cupiennin-2e (35 aa).

E35 carries the glutamic acid 1-amide modification.

Expressed by the venom gland.

The protein localises to the secreted. The protein is Cupiennin-2e of Cupiennius salei (American wandering spider).